We begin with the raw amino-acid sequence, 397 residues long: Elongation factor Tu (397 aa).

The tr-type G domain maps to 10–207 (KPHVNIGTIG…ACDSYIEEPE (198 aa)). Residues 19–26 (GHIDHGKT) form a G1 region. Position 19 to 26 (19 to 26 (GHIDHGKT)) interacts with GTP. T26 contacts Mg(2+). A G2 region spans residues 60–64 (GITIA). The tract at residues 81 to 84 (DCPG) is G3. GTP-binding positions include 81 to 85 (DCPGH) and 136 to 139 (NKCD). The tract at residues 136–139 (NKCD) is G4. Positions 174–176 (SAL) are G5.

This sequence belongs to the TRAFAC class translation factor GTPase superfamily. Classic translation factor GTPase family. EF-Tu/EF-1A subfamily. Monomer.

It localises to the cytoplasm. It carries out the reaction GTP + H2O = GDP + phosphate + H(+). GTP hydrolase that promotes the GTP-dependent binding of aminoacyl-tRNA to the A-site of ribosomes during protein biosynthesis. In Maridesulfovibrio salexigens (strain ATCC 14822 / DSM 2638 / NCIMB 8403 / VKM B-1763) (Desulfovibrio salexigens), this protein is Elongation factor Tu.